We begin with the raw amino-acid sequence, 225 residues long: E3 ubiquitin-protein ligase ATL76 (225 aa).

A helical transmembrane segment spans residues 59–79; sequence LMLLSVLICGIICCLGLHYII. An RING-type; atypical zinc finger spans residues 135–177; that stretch reads CVICLSDFVSGEQLRLLPKCNHGFHVRCIDKWLQHHLTCPKCR.

It belongs to the RING-type zinc finger family. ATL subfamily.

It localises to the membrane. The catalysed reaction is S-ubiquitinyl-[E2 ubiquitin-conjugating enzyme]-L-cysteine + [acceptor protein]-L-lysine = [E2 ubiquitin-conjugating enzyme]-L-cysteine + N(6)-ubiquitinyl-[acceptor protein]-L-lysine.. It functions in the pathway protein modification; protein ubiquitination. Functionally, E3 ubiquitin-protein ligase able to catalyze polyubiquitination with ubiquitin-conjugating enzyme E2 UBC8 in vitro. This chain is E3 ubiquitin-protein ligase ATL76 (ATL76), found in Arabidopsis thaliana (Mouse-ear cress).